Here is a 138-residue protein sequence, read N- to C-terminus: Small ribosomal subunit protein uS11c (138 aa).

Positions 1–23 (MAKPILRIGSRKNTRSGSRKNVR) are disordered. Over residues 9-23 (GSRKNTRSGSRKNVR) the composition is skewed to basic residues.

This sequence belongs to the universal ribosomal protein uS11 family. In terms of assembly, part of the 30S ribosomal subunit.

It localises to the plastid. It is found in the chloroplast. The polypeptide is Small ribosomal subunit protein uS11c (Crucihimalaya wallichii (Rock-cress)).